The sequence spans 243 residues: Probable transcriptional regulatory protein BH0025 (243 aa).

The protein belongs to the TACO1 family.

It is found in the cytoplasm. In Borrelia hermsii (strain HS1 / DAH), this protein is Probable transcriptional regulatory protein BH0025.